We begin with the raw amino-acid sequence, 361 residues long: 45 kDa calcium-binding protein (361 aa).

The N-terminal stretch at 1-35 is a signal peptide; sequence MVWLVAMTPRQSSLCGLAAHGLWFLGLVLLMDATA. Asn39 carries an N-linked (GlcNAc...) asparagine glycan. 2 consecutive EF-hand domains span residues 97 to 132 and 136 to 171; these read RSRR…KTAE and EAVK…SKGH. Phosphoserine is present on Ser98. The Ca(2+) site is built by Asp110, Asn112, Asp114, Arg116, Glu121, Asp149, Asp151, Asp153, His155, and Glu160. At Thr192 the chain carries Phosphothreonine. 4 EF-hand domains span residues 196–231, 232–267, 277–312, and 313–348; these read LGNL…HSRG, MLKF…TVEN, WVKD…MNEY, and NALN…FTGS. Residue Asp212 coordinates Ca(2+). Phosphothreonine is present on Thr216. 6 residues coordinate Ca(2+): Glu219, Asp245, Asp247, Asp249, Gln251, and Glu256. Thr264 is subject to Phosphothreonine. Positions 290, 292, and 294 each coordinate Ca(2+). At Thr298 the chain carries Phosphothreonine. Residues Glu301, Asp326, Asn328, Asn330, His332, and Glu337 each coordinate Ca(2+). The necessary for intracellular retention in Golgi apparatus lumen stretch occupies residues 308 to 361; that stretch reads PMNEYNALNEAKQMIAIADENQNHHLEPEEILKYSEFFTGSKLMDYARNVHEEF.

This sequence belongs to the CREC family. Ubiquitous.

It is found in the golgi apparatus lumen. May regulate calcium-dependent activities in the endoplasmic reticulum lumen or post-ER compartment. This chain is 45 kDa calcium-binding protein (Sdf4), found in Mus musculus (Mouse).